A 434-amino-acid chain; its full sequence is Iron transporter MagA (434 aa).

10 helical membrane-spanning segments follow: residues 6–26, 31–51, 56–76, 86–106, 113–133, 176–196, 269–289, 294–314, 321–341, and 357–377; these read PELT…GMMT, PAVV…FGLV, AVAT…GMKL, KTAI…ALLL, SLGL…AVVI, LLPA…LLFW, SVLL…KFIW, TVLT…VTAL, WPSA…SFLL, and KLVV…LFTM.

Belongs to the monovalent cation:proton antiporter 2 (CPA2) transporter (TC 2.A.37) family.

It localises to the membrane. In terms of biological role, iron transporter, which is required for the synthesis of bacterial magnetic particles (BMPs). Probably involved in the transport of iron from the environment into the cytoplasm across the cell membrane, and then from the cytoplasm into the BMP lipid vesicle across the BMP membrane. This Paramagnetospirillum magneticum (strain ATCC 700264 / AMB-1) (Magnetospirillum magneticum) protein is Iron transporter MagA (magA).